The chain runs to 161 residues: Nucleotide-binding protein PputGB1_4497 (161 aa).

It belongs to the YajQ family.

Nucleotide-binding protein. This is Nucleotide-binding protein PputGB1_4497 from Pseudomonas putida (strain GB-1).